The primary structure comprises 169 residues: Oleosin Cor a 15 (169 aa).

The next 2 membrane-spanning stretches (helical) occupy residues 38–58 and 70–90; these read IAVVTLLPLGGFLLLLAGLTF and PLFVLCSPVLVPAAIVIGLAV. The short motif at 70–81 is the Proline-knot element; it reads PLFVLCSPVLVP. 2 stretches are compositionally biased toward basic and acidic residues: residues 122 to 131 and 160 to 169; these read QMEHAKRRAQ and EGGRGEEKKT. Residues 122–169 form a disordered region; sequence QMEHAKRRAQDTAGHLGQKARETGQTVTGKGQEAGKTLEGGRGEEKKT.

It belongs to the oleosin family. As to expression, expressed in seeds (at protein level).

The protein resides in the lipid droplet. It is found in the membrane. In terms of biological role, may have a structural role to stabilize the lipid body during desiccation of the seed by preventing coalescence of the oil. Probably interacts with both lipid and phospholipid moieties of lipid bodies. May also provide recognition signals for specific lipase anchorage in lipolysis during seedling growth. This chain is Oleosin Cor a 15, found in Corylus avellana (European hazel).